Reading from the N-terminus, the 396-residue chain is Putative amidohydrolase YhaA (396 aa).

D85 is an active-site residue. Residue E143 is the Proton acceptor of the active site. Residues E144, R182, and H368 each coordinate Zn(2+).

The protein belongs to the peptidase M20A family. Requires Zn(2+) as cofactor. Co(2+) is required as a cofactor.

The polypeptide is Putative amidohydrolase YhaA (yhaA) (Bacillus subtilis (strain 168)).